Consider the following 214-residue polypeptide: MGWIRDRRSPSSMEIRELHNRDVINRGAFKSRQKRTQTLITSKCGENPSPFFLARSIAIAMGIRFIVMVMIYSGMIINLLFNQEAPSPLKESYCGPCPKNWICYRNSCYQFSNESKTWLQSQASCRSQNSSLLKIYSREDQDFFKLVKSYHWMGLVQIPTNRSWQWEDGSILSPNQITMVEMQNGSCAVYGSSFKGYTENCLTLNTYICMKRTV.

Topologically, residues 1-56 (MGWIRDRRSPSSMEIRELHNRDVINRGAFKSRQKRTQTLITSKCGENPSPFFLARS) are cytoplasmic. Residues 57–77 (IAIAMGIRFIVMVMIYSGMII) traverse the membrane as a helical; Signal-anchor for type II membrane protein segment. At 78 to 214 (NLLFNQEAPS…NTYICMKRTV (137 aa)) the chain is on the extracellular side. 2 disulfides stabilise this stretch: Cys-94–Cys-103 and Cys-97–Cys-108. In terms of domain architecture, C-type lectin spans 98–210 (PKNWICYRNS…CLTLNTYICM (113 aa)). Asn-113, Asn-129, Asn-161, and Asn-184 each carry an N-linked (GlcNAc...) asparagine glycan. Cystine bridges form between Cys-125–Cys-209 and Cys-187–Cys-201.

As to quaternary structure, homodimer; disulfide-linked. Heterohexamer composed of two subunits of KLRK1 and four subunits of HCST/DAP10. Interacts (via transmembrane domain) with HCST/DAP10 (via transmembrane domain); the interaction is required for KLRK1 NK cell surface and induces NK cell-mediated cytotoxicity. Can form disulfide-bonded heterodimer with CD94. Interacts with CEACAM1; recruits PTPN6 that dephosphorylates VAV1. In terms of tissue distribution, detected in peripheral blood leukocytes, macrophages, monocytes and natural killer cells.

It is found in the cell membrane. Functionally, functions as an activating and costimulatory receptor involved in immunosurveillance upon binding to various cellular stress-inducible ligands displayed at the surface of autologous tumor cells and virus-infected cells. Provides both stimulatory and costimulatory innate immune responses on activated killer (NK) cells, leading to cytotoxic activity. Acts as a costimulatory receptor for T-cell receptor (TCR) in CD8(+) T-cell-mediated adaptive immune responses by amplifying T-cell activation. Stimulates perforin-mediated elimination of ligand-expressing tumor cells. Signaling involves calcium influx, culminating in the expression of TNF-alpha. Participates in NK cell-mediated bone marrow graft rejection. May play a regulatory role in differentiation and survival of NK cells. Binds to ligands belonging to various subfamilies of MHC class I-related glycoproteins. The chain is NKG2-D type II integral membrane protein (KLRK1) from Sus scrofa (Pig).